Consider the following 261-residue polypeptide: tRNA pseudouridine synthase A (261 aa).

Aspartate 51 (nucleophile) is an active-site residue. Position 109 (tyrosine 109) interacts with substrate.

The protein belongs to the tRNA pseudouridine synthase TruA family. In terms of assembly, homodimer.

It carries out the reaction uridine(38/39/40) in tRNA = pseudouridine(38/39/40) in tRNA. Formation of pseudouridine at positions 38, 39 and 40 in the anticodon stem and loop of transfer RNAs. The protein is tRNA pseudouridine synthase A of Shewanella woodyi (strain ATCC 51908 / MS32).